The primary structure comprises 498 residues: Polygalacturonan/rhamnogalacturonan-binding protein YtcQ (498 aa).

Positions 1-22 (MGNKWRVLLIVLVLALGGVLAG) are cleaved as a signal peptide. Cysteine 23 carries N-palmitoyl cysteine lipidation. Cysteine 23 carries the S-diacylglycerol cysteine lipid modification.

Belongs to the bacterial solute-binding protein 1 family. As to quaternary structure, the complex is probably composed of two ATP-binding proteins (MsmX), two transmembrane proteins (YtcP and YteP) and a solute-binding protein (YtcQ).

Its subcellular location is the cell membrane. Functionally, involved in pectin degradation. Part of the ABC transporter complex YtcQP-YteP involved in the uptake of polygalacturonan and rhamnogalacturonan type I. The protein is Polygalacturonan/rhamnogalacturonan-binding protein YtcQ (ytcQ) of Bacillus subtilis (strain 168).